Consider the following 1176-residue polypeptide: 3-hydroxy-3-methylglutaryl-coenzyme A reductase (1176 aa).

Residues 1–34 (MSLPNHSGSSAFKSFSYIVGTGIKRAAKLSTRNP) are Cytoplasmic-facing. Residues 35 to 55 (IEMIVVVLILSSFSYFYLFNL) traverse the membrane as a helical segment. The Lumenal segment spans residues 56–299 (ARTSDIFSGT…VKELIDLADN (244 aa)). Asn-224 and Asn-238 each carry an N-linked (GlcNAc...) asparagine glycan. A helical transmembrane segment spans residues 300 to 320 (IDIIVILVGYIMMIATFISLY). An SSD domain is found at 301 to 465 (DIIVILVGYI…FTWYTAVLAL (165 aa)). At 321–330 (VNMRAMGSRY) the chain is on the cytoplasmic side. A helical membrane pass occupies residues 331-351 (TLATAVVFNGFFSFMLALLTV). The Lumenal portion of the chain corresponds to 352 to 355 (RALG). Residues 356 to 376 (VDVYPVVLAEAIPFLAVTIGF) traverse the membrane as a helical segment. Residues 377-422 (ERPFKLTKRVFQFSKETPLTKQEIRTTIMRAVDTVALPIARDCFME) lie on the Cytoplasmic side of the membrane. The chain crosses the membrane as a helical span at residues 423 to 443 (IIVLVLGAKSGISGLEEFCLL). Position 444 (Ser-444) is a topological domain, lumenal. A helical transmembrane segment spans residues 445–465 (AILLAYDFIIMFTWYTAVLAL). Over 466–524 (KLELLRIREINGISADDIKKGTKKSTGYIRRTVIKAFSDDHAAGANTANQKADGPIIGR) the chain is Cytoplasmic. The chain crosses the membrane as a helical span at residues 525 to 545 (VKLLMIVGFVVMHIFKFCSAF). Residues 546–622 (QSVGPQVNIT…DTYAVYIQHP (77 aa)) lie on the Lumenal side of the membrane. 2 N-linked (GlcNAc...) asparagine glycosylation sites follow: Asn-553 and Asn-596. The chain crosses the membrane as a helical span at residues 623-643 (VISKWLTIALFVSLFLNTYLF). Topologically, residues 644–1176 (NVAKQPKQIV…GTEPGTCIKS (533 aa)) are cytoplasmic. The disordered stretch occupies residues 699–724 (PNHKRSHNHHHSHSHSHNHHSNHHQS). Positions 700-721 (NHKRSHNHHHSHSHSHNHHSNH) are enriched in basic residues. Glu-841 functions as the Charge relay system in the catalytic mechanism. Residue 847 to 853 (STARGCK) participates in CoA binding. Residues 907-909 (SRF) and 934-942 (DAMGMNMIS) contribute to the NADP(+) site. Lys-972 functions as the Charge relay system in the catalytic mechanism. 1001 to 1003 (VLK) lines the CoA pocket. Asp-1048 (charge relay system) is an active-site residue. 1145–1146 (AH) serves as a coordination point for CoA. The active-site Proton donor is His-1146. NADP(+) is bound at residue 1150–1151 (NR). Residues 1153–1176 (TQAPTITSGPAPSTGTEPGTCIKS) are disordered.

The protein belongs to the HMG-CoA reductase family.

Its subcellular location is the endoplasmic reticulum membrane. It catalyses the reaction (R)-mevalonate + 2 NADP(+) + CoA = (3S)-3-hydroxy-3-methylglutaryl-CoA + 2 NADPH + 2 H(+). The protein operates within metabolic intermediate biosynthesis; (R)-mevalonate biosynthesis; (R)-mevalonate from acetyl-CoA: step 3/3. In terms of biological role, HMG-CoA reductase; part of the first module of ergosterol biosynthesis pathway that includes the early steps of the pathway, conserved across all eukaryotes, and which results in the formation of mevalonate from acetyl-coenzyme A (acetyl-CoA). In this module, the cytosolic acetyl-CoA acetyltransferase catalyzes the formation of acetoacetyl-CoA. The hydroxymethylglutaryl-CoA synthase then condenses acetyl-CoA with acetoacetyl-CoA to form HMG-CoA. The rate-limiting step of the early module is the reduction to mevalonate by the 3-hydroxy-3-methylglutaryl-coenzyme A (HMG-CoA) reductase hmgA. The polypeptide is 3-hydroxy-3-methylglutaryl-coenzyme A reductase (Phycomyces blakesleeanus (strain ATCC 8743b / DSM 1359 / FGSC 10004 / NBRC 33097 / NRRL 1555)).